Consider the following 250-residue polypeptide: DNA repair protein RecO (250 aa).

It belongs to the RecO family.

Functionally, involved in DNA repair and RecF pathway recombination. This is DNA repair protein RecO from Staphylococcus haemolyticus (strain JCSC1435).